The sequence spans 72 residues: uncharacterized protein (72 aa).

This is an uncharacterized protein from Vaccinia virus (strain Western Reserve) (VACV).